The sequence spans 451 residues: Serine/threonine-protein kinase VRK3 (451 aa).

Disordered stretches follow at residues 28 to 61 (KHEG…SKKV) and 74 to 125 (LPSE…MTAS). Polar residues predominate over residues 32-45 (SQSFVKPFTSSSQG). The Nuclear localization signal signature appears at 47-62 (RRKTNTSSETSSKKVK). Phosphoserine is present on residues S53, S57, S80, S81, S88, and S106. Residues 78–91 (GKSSGSEDTLSTSG) show a composition bias toward polar residues. Low complexity predominate over residues 98–116 (SRSPTPRSSPQTTRQSPQT). The 312-residue stretch at 123-434 (TASLEALPVG…TLRNELEALL (312 aa)) folds into the Protein kinase domain.

The protein belongs to the protein kinase superfamily. CK1 Ser/Thr protein kinase family. VRK subfamily. As to quaternary structure, interacts with DUSP3. Interacts with RAN. Interacts with HSP70/HSPA1A. Post-translationally, phosphorylated at Ser-106 by CDK5; leading to protection of the cell against H2O2-induced apoptosis. In terms of processing, ubiquitinated by RNF144A.

Its subcellular location is the nucleus. It localises to the cytoplasm. It carries out the reaction L-seryl-[protein] + ATP = O-phospho-L-seryl-[protein] + ADP + H(+). Plays a role in the regulation of the cell cycle by phosphorylating the nuclear envelope protein barrier-to-autointegration factor/BAF that is required for disassembly and reassembly, respectively, of the nuclear envelope during mitosis. Under normal physiological conditions, negatively regulates ERK activity along with VHR phosphatase in the nucleus, causing timely and transient action of ERK. Stress conditions activate CDK5 which phosphorylates VRK3 to increase VHR phosphatase activity and suppress prolonged ERK activation that causes cell death. For example, upon glutamate induction, promotes nuclear localization of HSP70/HSPA1A to inhibit ERK activation via VHR phosphatase. In Bos taurus (Bovine), this protein is Serine/threonine-protein kinase VRK3 (VRK3).